A 187-amino-acid polypeptide reads, in one-letter code: MLPDKGWLVEARRVPSPHYDCRPDDEKPSLLVVHNISLPPGEFGGPWIDALFTGTIDPDAHPFFAEIAHLRVSAHCLIRRDGEIVQYVPFDKRAWHAGVSNYQGRERCNDFSIGIELEGTDTLAYTDAQYQQLAAVTRTLIASYPAIADNMTGHCNIAPDRKTDPGPAFDWPRFRALVALSSHKEMT.

The N-acetylmuramoyl-L-alanine amidase domain maps to 29–167; sequence SLLVVHNISL…APDRKTDPGP (139 aa). His34 contacts Zn(2+). Glu116 (proton acceptor) is an active-site residue. Positions 154 and 164 each coordinate Zn(2+).

It belongs to the N-acetylmuramoyl-L-alanine amidase 2 family. It depends on Zn(2+) as a cofactor.

Its subcellular location is the cytoplasm. The catalysed reaction is Hydrolyzes the link between N-acetylmuramoyl residues and L-amino acid residues in certain cell-wall glycopeptides.. Involved in cell wall peptidoglycan recycling. Specifically cleaves the amide bond between the lactyl group of N-acetylmuramic acid and the alpha-amino group of the L-alanine in degradation products containing an anhydro N-acetylmuramyl moiety. This is 1,6-anhydro-N-acetylmuramyl-L-alanine amidase AmpD (ampD) from Salmonella typhimurium (strain SL1344).